The sequence spans 357 residues: NADH-quinone oxidoreductase subunit H (357 aa).

A run of 8 helical transmembrane segments spans residues 20 to 40 (WLLV…MGCV), 92 to 112 (ALFV…WAVI), 127 to 147 (LLFV…AGWA), 165 to 185 (ISYE…SGSL), 203 to 223 (GLTF…IYII), 259 to 279 (FFLA…LMFL), 294 to 314 (IPGW…FIWF), and 329 to 349 (LGWK…AIWM).

This sequence belongs to the complex I subunit 1 family. As to quaternary structure, NDH-1 is composed of 14 different subunits. Subunits NuoA, H, J, K, L, M, N constitute the membrane sector of the complex.

The protein resides in the cell inner membrane. It carries out the reaction a quinone + NADH + 5 H(+)(in) = a quinol + NAD(+) + 4 H(+)(out). NDH-1 shuttles electrons from NADH, via FMN and iron-sulfur (Fe-S) centers, to quinones in the respiratory chain. The immediate electron acceptor for the enzyme in this species is believed to be ubiquinone. Couples the redox reaction to proton translocation (for every two electrons transferred, four hydrogen ions are translocated across the cytoplasmic membrane), and thus conserves the redox energy in a proton gradient. This subunit may bind ubiquinone. This is NADH-quinone oxidoreductase subunit H from Herminiimonas arsenicoxydans.